A 461-amino-acid chain; its full sequence is RCC1-like G exchanging factor-like protein (461 aa).

Residues 1 to 10 (MLAAARALRG) show a composition bias toward low complexity. The transit peptide at 1 to 34 (MLAAARALRGPRPRWPTPAREHWTPAGRSRSRRE) directs the protein to the mitochondrion. Residues 1–35 (MLAAARALRGPRPRWPTPAREHWTPAGRSRSRREA) are disordered. RCC1 repeat units lie at residues 55-121 (ADRV…LSSK), 125-188 (VTKV…VLTD), 190-244 (EGVF…FLTD), 245-297 (KGEV…ALSA), 298-350 (DGGV…VLNA), 352-408 (GHVF…ALTN), and 409-458 (KGEL…TLAK).

Forms a regulatory protein-RNA complex, consisting of RCC1L, NGRN, RPUSD3, RPUSD4, TRUB2, FASTKD2 and 16S mt-rRNA. Interacts with 16S mt-rRNA; this interaction is direct. Interacts with OPA1; this interaction is direct. In terms of tissue distribution, at E8.5, broadly expressed in yolk sac placenta, decidua, and embryo, with highest levels found in the trophoblast giant cells (TGCs) and ectoplacental cone (at protein level).

The protein localises to the mitochondrion inner membrane. In terms of biological role, guanine nucleotide exchange factor (GEF) for mitochondrial dynamin-related GTPase OPA1. Activates OPA1, by exchanging bound GDP for free GTP, and drives OPA1 and MFN1-dependent mitochondrial fusion. Plays an essential role in mitochondrial ribosome biogenesis. As a component of a functional protein-RNA module, consisting of RCC1L, NGRN, RPUSD3, RPUSD4, TRUB2, FASTKD2 and 16S mitochondrial ribosomal RNA (16S mt-rRNA), controls 16S mt-rRNA abundance and is required for intra-mitochondrial translation of core subunits of the oxidative phosphorylation system. This Mus musculus (Mouse) protein is RCC1-like G exchanging factor-like protein.